Consider the following 507-residue polypeptide: MVTIRADEISNIIRERIEQYNREVKIVNTGTVLQVGDGIARIHGLDEVMAGELVEFEESTIGIAPNLESNNVGVVLMGDGLMIQEGSSVKATGRIAQIPVSEAYLGRVINALAKPIDGRGEISSSESRLIESPAPGIISRRSVYEPLQTGLIAIDSMIPIGRGQRELIIGDRQTGKTAVATDTILNQKGQNVICVYVAIGQKASSVAQVVTTFQEQGAMEYTIVVAETADSPATLQYLAPYTGAALAEYFMYRERHTLIIHDDPSKQAQAYRQMSLLLRRPPGREAYPGDVFYLHSRLLERAAKSSSRLGEGSMTALPIVETQSGDVSAYIPTNVISITDGQIFLSADLFNAGIRPAINVGISVSRVGSAAQIKAMKQVAGKSKLELAQFAELEAFAQFASDLDKATQNQLARGQRLRELLKQSQAAPLAVEEQVVTIYTGANGYLDPLEIGQVKKFLVQLRTYLRTNKPQFQEIISSTRTFTEEAEAILKEAIQEQIELFLFQEQT.

Position 170–177 (170–177 (GDRQTGKT)) interacts with ATP.

It belongs to the ATPase alpha/beta chains family. As to quaternary structure, F-type ATPases have 2 components, CF(1) - the catalytic core - and CF(0) - the membrane proton channel. CF(1) has five subunits: alpha(3), beta(3), gamma(1), delta(1), epsilon(1). CF(0) has four main subunits: a, b, b' and c.

The protein localises to the plastid. It is found in the chloroplast thylakoid membrane. The catalysed reaction is ATP + H2O + 4 H(+)(in) = ADP + phosphate + 5 H(+)(out). Produces ATP from ADP in the presence of a proton gradient across the membrane. The alpha chain is a regulatory subunit. The sequence is that of ATP synthase subunit alpha, chloroplastic from Amborella trichopoda.